A 63-amino-acid chain; its full sequence is Cecropin-A1 (63 aa).

The N-terminal stretch at 1–19 (MNFYNIFVFVALILAITIG) is a signal peptide. An Arginine amide modification is found at R62.

The protein belongs to the cecropin family.

It localises to the secreted. Cecropins have lytic and antibacterial activity against several Gram-positive and Gram-negative bacteria. This is Cecropin-A1 (CecA1) from Drosophila simulans (Fruit fly).